Consider the following 371-residue polypeptide: Glutamate 5-kinase (371 aa).

Lys12 is an ATP binding site. The substrate site is built by Ser52, Asp136, and Asn148. ATP-binding positions include 168-169 and 210-216; these read SD and TGGMRTK. The PUA domain occupies 275–354; that stretch reads QGEILVDEGA…EDIAEKFGYS (80 aa).

It belongs to the glutamate 5-kinase family.

The protein localises to the cytoplasm. The catalysed reaction is L-glutamate + ATP = L-glutamyl 5-phosphate + ADP. The protein operates within amino-acid biosynthesis; L-proline biosynthesis; L-glutamate 5-semialdehyde from L-glutamate: step 1/2. Catalyzes the transfer of a phosphate group to glutamate to form L-glutamate 5-phosphate. The polypeptide is Glutamate 5-kinase (Idiomarina loihiensis (strain ATCC BAA-735 / DSM 15497 / L2-TR)).